The sequence spans 557 residues: Dihydroxy-acid dehydratase (557 aa).

Asp78 serves as a coordination point for Mg(2+). Cys119 contacts [2Fe-2S] cluster. 2 residues coordinate Mg(2+): Asp120 and Lys121. Lys121 is modified (N6-carboxylysine). Cys192 is a binding site for [2Fe-2S] cluster. Glu442 serves as a coordination point for Mg(2+). Ser468 acts as the Proton acceptor in catalysis.

This sequence belongs to the IlvD/Edd family. In terms of assembly, homodimer. [2Fe-2S] cluster is required as a cofactor. Requires Mg(2+) as cofactor.

The catalysed reaction is (2R)-2,3-dihydroxy-3-methylbutanoate = 3-methyl-2-oxobutanoate + H2O. It catalyses the reaction (2R,3R)-2,3-dihydroxy-3-methylpentanoate = (S)-3-methyl-2-oxopentanoate + H2O. It functions in the pathway amino-acid biosynthesis; L-isoleucine biosynthesis; L-isoleucine from 2-oxobutanoate: step 3/4. It participates in amino-acid biosynthesis; L-valine biosynthesis; L-valine from pyruvate: step 3/4. Functions in the biosynthesis of branched-chain amino acids. Catalyzes the dehydration of (2R,3R)-2,3-dihydroxy-3-methylpentanoate (2,3-dihydroxy-3-methylvalerate) into 2-oxo-3-methylpentanoate (2-oxo-3-methylvalerate) and of (2R)-2,3-dihydroxy-3-methylbutanoate (2,3-dihydroxyisovalerate) into 2-oxo-3-methylbutanoate (2-oxoisovalerate), the penultimate precursor to L-isoleucine and L-valine, respectively. The chain is Dihydroxy-acid dehydratase from Bacillus cereus (strain ZK / E33L).